Here is a 467-residue protein sequence, read N- to C-terminus: D-hydantoinase (467 aa).

3 residues coordinate Zn(2+): histidine 65, histidine 67, and lysine 156. Position 156 is an N6-carboxylysine (lysine 156). Substrate is bound at residue tyrosine 161. Zn(2+) contacts are provided by histidine 189 and histidine 245. Residue serine 294 participates in substrate binding. Position 321 (aspartate 321) interacts with Zn(2+). Position 343 (asparagine 343) interacts with substrate.

This sequence belongs to the metallo-dependent hydrolases superfamily. Hydantoinase/dihydropyrimidinase family. In terms of assembly, homotetramer. Zn(2+) is required as a cofactor. In terms of processing, carboxylation allows a single lysine to coordinate two zinc ions.

In terms of biological role, catalyzes the stereospecific hydrolysis of the cyclic amide bond of D-hydantoin derivatives. The sequence is that of D-hydantoinase (hyuA) from Streptomyces coelicolor (strain ATCC BAA-471 / A3(2) / M145).